We begin with the raw amino-acid sequence, 882 residues long: DNA mismatch repair protein MutS (882 aa).

ATP is bound at residue 627–634 (GPNMAGKS).

The protein belongs to the DNA mismatch repair MutS family.

Its function is as follows. This protein is involved in the repair of mismatches in DNA. It is possible that it carries out the mismatch recognition step. This protein has a weak ATPase activity. The sequence is that of DNA mismatch repair protein MutS from Anaeromyxobacter dehalogenans (strain 2CP-1 / ATCC BAA-258).